Consider the following 316-residue polypeptide: N-acetylmuramic acid 6-phosphate etherase (316 aa).

One can recognise an SIS domain in the interval 66-229; that stretch reads IVAAIGRGGR…STASMIRLGK (164 aa). Residue Glu94 is the Proton donor of the active site. The active site involves Glu125.

Belongs to the GCKR-like family. MurNAc-6-P etherase subfamily. In terms of assembly, homodimer.

It catalyses the reaction N-acetyl-D-muramate 6-phosphate + H2O = N-acetyl-D-glucosamine 6-phosphate + (R)-lactate. The protein operates within amino-sugar metabolism; 1,6-anhydro-N-acetylmuramate degradation. Its pathway is amino-sugar metabolism; N-acetylmuramate degradation. It functions in the pathway cell wall biogenesis; peptidoglycan recycling. Its function is as follows. Specifically catalyzes the cleavage of the D-lactyl ether substituent of MurNAc 6-phosphate, producing GlcNAc 6-phosphate and D-lactate. Together with AnmK, is also required for the utilization of anhydro-N-acetylmuramic acid (anhMurNAc) either imported from the medium or derived from its own cell wall murein, and thus plays a role in cell wall recycling. The sequence is that of N-acetylmuramic acid 6-phosphate etherase from Jannaschia sp. (strain CCS1).